Consider the following 357-residue polypeptide: Quinolinate synthase (357 aa).

The iminosuccinate site is built by histidine 50 and serine 71. Cysteine 116 serves as a coordination point for [4Fe-4S] cluster. Iminosuccinate is bound by residues 142–144 (YAN) and serine 159. Cysteine 203 lines the [4Fe-4S] cluster pocket. Residues 229 to 231 (HPE) and threonine 246 each bind iminosuccinate. Cysteine 300 contacts [4Fe-4S] cluster.

The protein belongs to the quinolinate synthase family. Type 1 subfamily. [4Fe-4S] cluster serves as cofactor.

Its subcellular location is the cytoplasm. The enzyme catalyses iminosuccinate + dihydroxyacetone phosphate = quinolinate + phosphate + 2 H2O + H(+). It functions in the pathway cofactor biosynthesis; NAD(+) biosynthesis; quinolinate from iminoaspartate: step 1/1. Functionally, catalyzes the condensation of iminoaspartate with dihydroxyacetone phosphate to form quinolinate. This is Quinolinate synthase from Shewanella sp. (strain ANA-3).